We begin with the raw amino-acid sequence, 327 residues long: Tyrosine--tRNA ligase (327 aa).

Tyr-33 is a binding site for L-tyrosine. Positions 38–46 (PSGVLHLGH) match the 'HIGH' region motif. Tyr-154, Gln-158, Asp-161, and Gln-176 together coordinate L-tyrosine. Residues 212–216 (KMSSS) carry the 'KMSKS' region motif. Ser-215 contributes to the ATP binding site.

Belongs to the class-I aminoacyl-tRNA synthetase family. TyrS type 3 subfamily. Homodimer.

It is found in the cytoplasm. The catalysed reaction is tRNA(Tyr) + L-tyrosine + ATP = L-tyrosyl-tRNA(Tyr) + AMP + diphosphate + H(+). Catalyzes the attachment of tyrosine to tRNA(Tyr) in a two-step reaction: tyrosine is first activated by ATP to form Tyr-AMP and then transferred to the acceptor end of tRNA(Tyr). This chain is Tyrosine--tRNA ligase, found in Halobacterium salinarum (strain ATCC 29341 / DSM 671 / R1).